A 277-amino-acid polypeptide reads, in one-letter code: Inorganic pyrophosphatase (277 aa).

Residue Arg80 participates in diphosphate binding. 3 residues coordinate Mg(2+): Asp117, Asp122, and Asp154.

The protein belongs to the PPase family. Mg(2+) serves as cofactor.

The protein resides in the cytoplasm. The enzyme catalyses diphosphate + H2O = 2 phosphate + H(+). Functionally, involved in osmoadaptation. The sequence is that of Inorganic pyrophosphatase (IPP1) from Encephalitozoon cuniculi (strain GB-M1) (Microsporidian parasite).